Here is a 65-residue protein sequence, read N- to C-terminus: Large ribosomal subunit protein bL33c (65 aa).

It belongs to the bacterial ribosomal protein bL33 family.

Its subcellular location is the plastid. It is found in the chloroplast. This chain is Large ribosomal subunit protein bL33c (rpl33), found in Marchantia polymorpha (Common liverwort).